We begin with the raw amino-acid sequence, 585 residues long: Glutamate decarboxylase 2 (585 aa).

Residues 1 to 24 (MASPGSGFWSFGSEDGSGDPENSG) are disordered. Phosphoserine is present on residues Ser3, Ser6, Ser10, and Ser13. S-palmitoyl cysteine attachment occurs at residues Cys30 and Cys45. A substrate-binding site is contributed by 181–183 (QLS). Position 396 is an N6-(pyridoxal phosphate)lysine (Lys396). Position 558 (Arg558) interacts with substrate.

This sequence belongs to the group II decarboxylase family. In terms of assembly, homodimer. The cofactor is pyridoxal 5'-phosphate. In terms of processing, phosphorylated; which does not affect kinetic parameters or subcellular location. Post-translationally, palmitoylated; which is required for presynaptic clustering.

Its subcellular location is the cytoplasm. It localises to the cytosol. The protein localises to the cytoplasmic vesicle. It is found in the presynaptic cell membrane. The protein resides in the golgi apparatus membrane. It catalyses the reaction L-glutamate + H(+) = 4-aminobutanoate + CO2. Its function is as follows. Catalyzes the production of GABA. This is Glutamate decarboxylase 2 (GAD2) from Sus scrofa (Pig).